Reading from the N-terminus, the 460-residue chain is Kynurenine 3-monooxygenase (460 aa).

FAD is bound by residues Val-13, Asp-32–Arg-34, and Ala-53. 2 residues coordinate L-kynurenine: Arg-83 and Tyr-97. FAD contacts are provided by residues Arg-109, Leu-133, Tyr-195, Asp-314, and Gln-325 to Asn-328. L-kynurenine is bound by residues Asn-373 and Tyr-408.

This sequence belongs to the aromatic-ring hydroxylase family. KMO subfamily. It depends on FAD as a cofactor.

It localises to the mitochondrion outer membrane. The enzyme catalyses L-kynurenine + NADPH + O2 + H(+) = 3-hydroxy-L-kynurenine + NADP(+) + H2O. It participates in cofactor biosynthesis; NAD(+) biosynthesis; quinolinate from L-kynurenine: step 1/3. Its function is as follows. Catalyzes the hydroxylation of L-kynurenine (L-Kyn) to form 3-hydroxy-L-kynurenine (L-3OHKyn). Required for synthesis of quinolinic acid. The sequence is that of Kynurenine 3-monooxygenase from Saccharomyces cerevisiae (strain ATCC 204508 / S288c) (Baker's yeast).